The following is a 104-amino-acid chain: Iron-sulfur cluster assembly protein CyaY (104 aa).

It belongs to the frataxin family.

Involved in iron-sulfur (Fe-S) cluster assembly. May act as a regulator of Fe-S biogenesis. In Aliivibrio fischeri (strain MJ11) (Vibrio fischeri), this protein is Iron-sulfur cluster assembly protein CyaY.